Here is a 360-residue protein sequence, read N- to C-terminus: Thiol protease SEN102 (360 aa).

A signal peptide spans 1–20; the sequence is MAKPKFIALALVALSFLSIA. A propeptide spans 21–133 (activation peptide); it reads QSIPFTEKDL…ENVGSLPAAS (113 aa). 3 cysteine pairs are disulfide-bonded: cysteine 151–cysteine 193, cysteine 185–cysteine 225, and cysteine 283–cysteine 335. Cysteine 154 is a catalytic residue. Catalysis depends on residues histidine 289 and asparagine 310. N-linked (GlcNAc...) asparagine glycosylation occurs at asparagine 353. The short motif at 357 to 360 is the Prevents secretion from ER element; that stretch reads RDEL.

It belongs to the peptidase C1 family.

It is found in the endoplasmic reticulum lumen. This is Thiol protease SEN102 (SEN102) from Hemerocallis sp. (Daylily).